The following is a 377-amino-acid chain: Succinyl-diaminopimelate desuccinylase (377 aa).

His66 contributes to the Zn(2+) binding site. Asp68 is an active-site residue. Asp99 serves as a coordination point for Zn(2+). Residue Glu133 is the Proton acceptor of the active site. Zn(2+)-binding residues include Glu134, Glu162, and His348.

Belongs to the peptidase M20A family. DapE subfamily. In terms of assembly, homodimer. Zn(2+) serves as cofactor. Co(2+) is required as a cofactor.

The enzyme catalyses N-succinyl-(2S,6S)-2,6-diaminopimelate + H2O = (2S,6S)-2,6-diaminopimelate + succinate. It functions in the pathway amino-acid biosynthesis; L-lysine biosynthesis via DAP pathway; LL-2,6-diaminopimelate from (S)-tetrahydrodipicolinate (succinylase route): step 3/3. Functionally, catalyzes the hydrolysis of N-succinyl-L,L-diaminopimelic acid (SDAP), forming succinate and LL-2,6-diaminopimelate (DAP), an intermediate involved in the bacterial biosynthesis of lysine and meso-diaminopimelic acid, an essential component of bacterial cell walls. This is Succinyl-diaminopimelate desuccinylase from Marinomonas sp. (strain MWYL1).